The chain runs to 259 residues: Protein POLYCHOME (259 aa).

The interval 236–259 (KMKSTPSAKRAEREKRVRTLMSMR) is disordered.

Interacts with APC/C activators such as APC5, FZR2, FZR3, CDC20.1 and CDC20.5. Expressed mainly in actively dividing cells (e.g. central cylinder of the root tip, young leaves and vascular tissues).

The protein resides in the nucleus. Negative regulator of the anaphase-promoting complex/cyclosome (APC/C) ubiquitin ligase required for proper mitotic progression and cell fate determination; inhibits premature cell differentiation. Prevents DNA endoreplication by promoting the maintenance of the mitotic state by preferentially inhibiting APC/C(FZR) and triggering cyclins accumulation (e.g. CYCB1-1, CYCB1-2 and CYCA2-3) in a temporal manner. Required for megagametophyte and endosperm development. Counteracts the activity of CCS52A1 thus inhibiting the turnover of CYCA2-3. Confers immunity to bacterial pathogens (e.g. Pseudomonas syringae pv. tomato DC3000), which is associated with increased expression of disease resistance (R) genes. In Arabidopsis thaliana (Mouse-ear cress), this protein is Protein POLYCHOME (PYM).